Here is a 108-residue protein sequence, read N- to C-terminus: MNLNIETITHDDFYEVKVGGELDVYTVPELEEVLVPMRQEGTHDVHVNLANVSYMDSTGLGLFVGTLKALNQNDKNLYILGVSERIGRLFDITGLKDLMHVNEGTEVE.

In terms of domain architecture, STAS spans 3-108; that stretch reads LNIETITHDD…MHVNEGTEVE (106 aa). S57 is subject to Phosphoserine.

The protein belongs to the anti-sigma-factor antagonist family. Phosphorylated by RsbW on a serine residue.

Functionally, positive regulator of sigma-B activity. Non-phosphorylated RsbV binds to RsbW, preventing its association with sigma-B. When phosphorylated, releases RsbW, which is then free to complex with and inactivate sigma-B. This is Anti-sigma-B factor antagonist (rsbV) from Staphylococcus epidermidis.